Here is a 302-residue protein sequence, read N- to C-terminus: Lipoyl synthase (302 aa).

7 residues coordinate [4Fe-4S] cluster: C44, C49, C55, C70, C74, C77, and S283. The Radical SAM core domain maps to 56–272 (WSKKHATVMI…AKVARSKGFL (217 aa)).

The protein belongs to the radical SAM superfamily. Lipoyl synthase family. [4Fe-4S] cluster serves as cofactor.

The protein resides in the cytoplasm. The catalysed reaction is [[Fe-S] cluster scaffold protein carrying a second [4Fe-4S](2+) cluster] + N(6)-octanoyl-L-lysyl-[protein] + 2 oxidized [2Fe-2S]-[ferredoxin] + 2 S-adenosyl-L-methionine + 4 H(+) = [[Fe-S] cluster scaffold protein] + N(6)-[(R)-dihydrolipoyl]-L-lysyl-[protein] + 4 Fe(3+) + 2 hydrogen sulfide + 2 5'-deoxyadenosine + 2 L-methionine + 2 reduced [2Fe-2S]-[ferredoxin]. The protein operates within protein modification; protein lipoylation via endogenous pathway; protein N(6)-(lipoyl)lysine from octanoyl-[acyl-carrier-protein]: step 2/2. In terms of biological role, catalyzes the radical-mediated insertion of two sulfur atoms into the C-6 and C-8 positions of the octanoyl moiety bound to the lipoyl domains of lipoate-dependent enzymes, thereby converting the octanoylated domains into lipoylated derivatives. In Orientia tsutsugamushi (strain Boryong) (Rickettsia tsutsugamushi), this protein is Lipoyl synthase.